The primary structure comprises 215 residues: Pyrophosphate-energized proton pump 2 (215 aa).

5 consecutive transmembrane segments (helical) span residues 16–36 (VYPLAICGACILTSIAGTFFV), 51–71 (GLIATGVFSVAGLAVATYATV), 86–106 (GTNLFFCGLVGLVVTALIVVI), 136–156 (GLAVSLESTALPAIVIVGGII), and 164–184 (LFGTGIAVTAMLGLAGMIVAL).

The protein belongs to the H(+)-translocating pyrophosphatase (TC 3.A.10) family. As to quaternary structure, homodimer. Mg(2+) is required as a cofactor.

Its subcellular location is the cell inner membrane. The catalysed reaction is diphosphate + H2O + H(+)(in) = 2 phosphate + 2 H(+)(out). Functionally, proton pump that utilizes the energy of pyrophosphate hydrolysis as the driving force for proton movement across the membrane. Generates a proton motive force. The chain is Pyrophosphate-energized proton pump 2 (hppA2) from Rhizobium leguminosarum bv. trifolii.